A 257-amino-acid chain; its full sequence is Snake venom serine protease CL5 (257 aa).

Positions 1–18 are cleaved as a signal peptide; that stretch reads MVLIRVLANLLILQLSYA. A propeptide spanning residues 19–24 is cleaved from the precursor; that stretch reads QRSSEL. Residues 25-248 form the Peptidase S1 domain; sequence VIGGDECNIN…HLDWIQSIIA (224 aa). Disulfide bonds link cysteine 31/cysteine 162, cysteine 49/cysteine 65, cysteine 141/cysteine 209, cysteine 173/cysteine 188, and cysteine 199/cysteine 224. Catalysis depends on histidine 64, which acts as the Charge relay system. 2 N-linked (GlcNAc...) asparagine glycosylation sites follow: asparagine 78 and asparagine 102. Aspartate 109 (charge relay system) is an active-site residue. 2 N-linked (GlcNAc...) asparagine glycosylation sites follow: asparagine 153 and asparagine 169. Serine 203 (charge relay system) is an active-site residue. Residue asparagine 250 is glycosylated (N-linked (GlcNAc...) asparagine).

It belongs to the peptidase S1 family. Snake venom subfamily. Monomer. In terms of tissue distribution, expressed by the venom gland.

The protein localises to the secreted. In terms of biological role, snake venom serine protease that may act in the hemostasis system of the prey. The chain is Snake venom serine protease CL5 from Trimeresurus stejnegeri (Chinese green tree viper).